Reading from the N-terminus, the 201-residue chain is Holliday junction resolvase RecU (201 aa).

4 residues coordinate Mg(2+): Thr85, Asp87, Glu100, and Gln119.

It belongs to the RecU family. Mg(2+) serves as cofactor.

It is found in the cytoplasm. It carries out the reaction Endonucleolytic cleavage at a junction such as a reciprocal single-stranded crossover between two homologous DNA duplexes (Holliday junction).. Endonuclease that resolves Holliday junction intermediates in genetic recombination. Cleaves mobile four-strand junctions by introducing symmetrical nicks in paired strands. Promotes annealing of linear ssDNA with homologous dsDNA. Required for DNA repair, homologous recombination and chromosome segregation. The polypeptide is Holliday junction resolvase RecU (Geobacillus thermodenitrificans (strain NG80-2)).